A 480-amino-acid polypeptide reads, in one-letter code: Pyruvate kinase II (480 aa).

Residue R36 coordinates substrate. Residues N38, S40, and D70 each contribute to the K(+) site. ATP is bound at residue 38 to 41 (NFSH). Residues R77 and K160 each contribute to the ATP site. K223 is a substrate binding site. A Mg(2+)-binding site is contributed by E225. Positions 251, 252, and 284 each coordinate substrate. D252 provides a ligand contact to Mg(2+).

Belongs to the pyruvate kinase family. Homotetramer. Mg(2+) is required as a cofactor. Requires K(+) as cofactor.

It catalyses the reaction pyruvate + ATP = phosphoenolpyruvate + ADP + H(+). It functions in the pathway carbohydrate degradation; glycolysis; pyruvate from D-glyceraldehyde 3-phosphate: step 5/5. Its activity is regulated as follows. Allosterically activated by AMP and by several sugar phosphates. Belongs to type II PK. Its function is as follows. Catalyzes the formation of pyruvate in the last step of glycolysis, it is irreversible under physiological conditions. The reaction is critical for the control of metabolic flux in the second part of glycolysis. This chain is Pyruvate kinase II (pykA), found in Salmonella typhimurium (strain LT2 / SGSC1412 / ATCC 700720).